Consider the following 94-residue polypeptide: Putative regulatory protein LEPBI_I0950 (94 aa).

It belongs to the RemA family.

This Leptospira biflexa serovar Patoc (strain Patoc 1 / ATCC 23582 / Paris) protein is Putative regulatory protein LEPBI_I0950.